A 187-amino-acid chain; its full sequence is Accessory gene regulator protein B (187 aa).

5 helical membrane passes run 49–69 (IAYI…FYLI), 82–102 (FWCY…VLHF), 107–127 (TLMM…APAA), 143–163 (YFSI…KEPY), and 164–184 (TQFI…IYYS).

Belongs to the AgrB family.

The protein resides in the cell membrane. In terms of biological role, essential for the production of a quorum sensing system signal molecule, the autoinducing peptide (AIP). This quorum sensing system is responsible for the regulation of the expression of virulence factor genes. Involved in the proteolytic processing of AgrD, the precursor of AIP. The sequence is that of Accessory gene regulator protein B from Staphylococcus aureus (strain MW2).